The primary structure comprises 147 residues: Protein PBDC1 homolog (147 aa).

This sequence belongs to the PBDC1 family.

Its subcellular location is the cytoplasm. The protein localises to the nucleus. The polypeptide is Protein PBDC1 homolog (Schizosaccharomyces pombe (strain 972 / ATCC 24843) (Fission yeast)).